The following is a 170-amino-acid chain: Cathelicidin antimicrobial peptide (170 aa).

An N-terminal signal peptide occupies residues 1–30; the sequence is MKTQRDGHSLGRWSLVLLLLGLVMPLAIVA. A propeptide spans 31 to 131 (cathelin-like domain (CLD)); it reads QVLSYKEAVL…DISCDKDNKR (101 aa). Intrachain disulfides connect cysteine 86–cysteine 97 and cysteine 108–cysteine 125. Positions 150–162 are active core; it reads FKRIVQRIKDFLR.

Belongs to the cathelicidin family. Monomer, homodimer or homotrimer (in vitro). Oligomerizes as tetra- or hexamer in solution (in vitro). Post-translationally, proteolytically cleaved by proteinase PRTN3 into antibacterial peptide LL-37. Proteolytically cleaved by cathepsin CTSG and neutrophil elastase ELANE. In terms of processing, resistant to proteolytic degradation in solution, and when bound to both zwitterionic (mimicking mammalian membranes) and negatively charged membranes (mimicking bacterial membranes). After secretion onto the skin surface, the CAMP gene product is processed by a serine protease-dependent mechanism into multiple novel antimicrobial peptides distinct from and shorter than cathelicidin LL-37. These peptides show enhanced antimicrobial action, acquiring the ability to kill skin pathogens such as S.aureus, E.coli and C.albicans. These peptides have lost the ability to stimulate CXCL8/IL8 release from keratinocytes. The peptides act synergistically, killing bacteria at lower concentrations when present together, and maintain activity at increased salt condition.

The protein localises to the secreted. Its subcellular location is the vesicle. In terms of biological role, antimicrobial protein that is an integral component of the innate immune system. Binds to bacterial lipopolysaccharides (LPS). Acts via neutrophil N-formyl peptide receptors to enhance the release of CXCL2. Postsecretory processing generates multiple cathelicidin antimicrobial peptides with various lengths which act as a topical antimicrobial defense in sweat on skin. The unprocessed precursor form, cathelicidin antimicrobial peptide, inhibits the growth of Gram-negative E.coli and E.aerogenes with efficiencies comparable to that of the mature peptide LL-37 (in vitro). Functionally, antimicrobial peptide that is an integral component of the innate immune system. Binds to bacterial lipopolysaccharides (LPS). Causes membrane permeabilization by forming transmembrane pores (in vitro). Causes lysis of E.coli. Exhibits antimicrobial activity against Gram-negative bacteria such as P.aeruginosa, S.typhimurium, E.aerogenes, E.coli and P.syringae, Gram-positive bacteria such as L.monocytogenes, S.epidermidis, S.pyogenes and S.aureus, as well as vancomycin-resistant enterococci (in vitro). Exhibits antimicrobial activity against methicillin-resistant S.aureus, P.mirabilis, and C.albicans in low-salt media, but not in media containing 100 mM NaCl (in vitro). Forms chiral supramolecular assemblies with quinolone signal (PQS) molecules of P.aeruginosa, which may lead to interference of bacterial quorum signaling and perturbance of bacterial biofilm formation. May form supramolecular fiber-like assemblies on bacterial membranes. Induces cytokine and chemokine producation as well as TNF/TNFA and CSF2/GMCSF production in normal human keratinocytes. Exhibits hemolytic activity against red blood cells. Exhibits antimicrobial activity against E.coli and B.megaterium (in vitro). The chain is Cathelicidin antimicrobial peptide from Pan troglodytes (Chimpanzee).